The following is a 348-amino-acid chain: S-adenosylmethionine-dependent nucleotide dehydratase RSAD2 (348 aa).

The region spanning 56 to 276 is the Radical SAM core domain; it reads SATPSSVNYH…LERHSSISCL (221 aa). [4Fe-4S] cluster-binding residues include Cys-70, Cys-74, and Cys-77.

It belongs to the radical SAM superfamily. RSAD2 family. [4Fe-4S] cluster serves as cofactor. In terms of tissue distribution, expressed at low levels in spleen and head kidney.

The protein localises to the endoplasmic reticulum membrane. In terms of biological role, interferon-inducible iron-sulfur (4FE-4S) cluster-binding antiviral protein which plays a major role in the cell antiviral state induced by type I and type II interferon. This chain is S-adenosylmethionine-dependent nucleotide dehydratase RSAD2, found in Oncorhynchus mykiss (Rainbow trout).